Consider the following 422-residue polypeptide: Cytochrome P-450 monooxygenase DoxA (422 aa).

A heme-binding site is contributed by Cys369.

It belongs to the cytochrome P450 family. In terms of assembly, monomer. It depends on heme as a cofactor.

The protein localises to the cytoplasm. The catalysed reaction is 13-deoxydaunorubicin + NADPH + O2 + H(+) = 13-dihydrodaunorubicin + NADP(+) + H2O. It catalyses the reaction 13-dihydrodaunorubicin + NADPH + O2 + H(+) = daunorubicin + NADP(+) + 2 H2O. It carries out the reaction 13-deoxycarminomycin + NADPH + O2 + H(+) = 13-dihydrocarminomycin + NADP(+) + H2O. The enzyme catalyses 13-dihydrocarminomycin + NADPH + O2 + H(+) = carminomycin + NADP(+) + 2 H2O. It participates in antibiotic biosynthesis; daunorubicin biosynthesis. Its pathway is antibiotic biosynthesis; carminomycin biosynthesis. Strongly inhibited by dithiothreitol and high ionic strength buffers. Its function is as follows. Involved in the biosynthesis of the anthracyclines carminomycin and daunorubicin (daunomycin) which are aromatic polyketide antibiotics that exhibit high cytotoxicity and are widely applied in the chemotherapy of a variety of cancers. In vivo, DoxA catalyzes the C-13 hydroxylation of 13-deoxycarminomycin and 13-deoxydaunorubicin to yield 13-dihydrocarminomycin and 13-dihydrodaunorubicin, respectively, as well as the oxidation of these 13-dihydro-anthracyclines to their respective 13-keto forms, carminomycin and daunorubicin. In vitro, it also catalyzes the C-14 hydroxylation of daunorubicin to form doxorubicin (adriamycin), although this strain is not a doxorubicin producer. It is not able to accept anthracyclinones (aglycones) and anthracyclines with a 10-carbomethoxyl moiety. 13-oxidation of the anthracyclines possessing the 4-methoxy substitution is greatly favored. The anthracycline analog desacetyladriamycin can be oxidized to 10-hydroxydesacetyladriamycin. It can only use NADP. DoxA acts jointly with DauV. This chain is Cytochrome P-450 monooxygenase DoxA (doxA), found in Streptomyces sp. (strain C5).